The chain runs to 483 residues: Protein P55 (483 aa).

The helical transmembrane segment at 342–359 (LTPVMALIIILVYYSIYG) threads the bilayer.

It localises to the host membrane. The chain is Protein P55 from Vitis vinifera (Grape).